Here is a 307-residue protein sequence, read N- to C-terminus: uncharacterized protein (307 aa).

Positions 254 to 278 (HSRHHRRHHRRHHHHHHQNSSHSDE) are disordered. The segment covering 255–272 (SRHHRRHHRRHHHHHHQN) has biased composition (basic residues).

The protein to yeast YOR062c.

This is an uncharacterized protein from Saccharomyces cerevisiae (strain ATCC 204508 / S288c) (Baker's yeast).